A 468-amino-acid chain; its full sequence is H(+)/Cl(-) exchange transporter ClcA (468 aa).

Over 1-32 the chain is Cytoplasmic; sequence MIKRERIVKSVLAHVPKDAINQFVSRGSTPTS. The helical transmembrane segment at 33-69 threads the bilayer; the sequence is FSVLFMAAIVGTLAGLVGTYFEIAVHFVSETRTEWLK. The Periplasmic portion of the chain corresponds to 70-76; the sequence is SEIGSVL. A helical transmembrane segment spans residues 77–100; sequence PLWLAAILISGALAFIGYYLVNRF. The Selectivity filter part_1 motif lies at 106 to 110; sequence GSGIP. Chloride is bound at residue Ser-107. The helical intramembrane region spans 109–116; sequence IPEIEGAM. Over 117–123 the chain is Cytoplasmic; the sequence is DNIRSVR. The next 2 helical transmembrane spans lie at 124-141 and 148-166; these read WWRV…ALGS and EGPT…TDIF. Residues 146-150 carry the Selectivity filter part_2 motif; the sequence is GREGP. The Cytoplasmic segment spans residues 167 to 176; the sequence is RVKDDDTRHS. 2 consecutive intramembrane regions (helical) follow at residues 177–189 and 193–201; these read LLAS…LAAA and PLAAIMFVV. Residues 202–214 are Cytoplasmic-facing; the sequence is EEMRPQFRYSLIS. A helical membrane pass occupies residues 215–232; it reads IRAVIISAIMANIVFRAI. The Periplasmic portion of the chain corresponds to 233–252; sequence NGQEAVITMPQYQSPELQSL. The chain crosses the membrane as a helical span at residues 253–281; the sequence is WLFLLLGSLFGVFGVVFNKLITIAQDSFV. At 282 to 287 the chain is on the cytoplasmic side; the sequence is ALHKND. Residues 288–309 traverse the membrane as a helical segment; sequence RKRYLITGTILGGVFGLLLLYV. The Periplasmic portion of the chain corresponds to 310-329; it reads PQLTGGGIGLIPDITNGNYS. Helical transmembrane passes span 330-349 and 355-376; these read ISIL…LCFG and GIFA…ASAD. The Selectivity filter part_3 signature appears at 355–359; sequence GIFAP. The chloride site is built by Ile-356 and Phe-357. The Periplasmic segment spans residues 377–386; sequence MLLPSLTIEP. The segment at residues 387-401 is an intramembrane region (helical); sequence GVFAIAGMGALFAAT. The note=Loop between two helices intramembrane region spans 402 to 404; sequence VRA. The helical intramembrane region spans 405–416; that stretch reads PITGILLVIEMT. The segment at residues 417 to 421 is an intramembrane region (note=Loop between two helices); it reads NNYYL. The helical transmembrane segment at 422–438 threads the bilayer; that stretch reads ILPLIITSLGAVIVAQL. Residues 439–468 are Cytoplasmic-facing; the sequence is LGGQPIYSQLLHRTLKNDKLRQQDLPENQA. Chloride is bound at residue Tyr-445.

This sequence belongs to the chloride channel (TC 2.A.49) family. ClcA subfamily. Homodimer.

It is found in the cell inner membrane. It carries out the reaction 2 chloride(in) + H(+)(out) = 2 chloride(out) + H(+)(in). Proton-coupled chloride transporter. Functions as antiport system and exchanges two chloride ions for 1 proton. Probably acts as an electrical shunt for an outwardly-directed proton pump that is linked to amino acid decarboxylation, as part of the extreme acid resistance (XAR) response. The polypeptide is H(+)/Cl(-) exchange transporter ClcA (Vibrio campbellii (strain ATCC BAA-1116)).